The primary structure comprises 296 residues: Solute carrier protein FPSE_08119 (296 aa).

Transmembrane regions (helical) follow at residues 12 to 32 (GLAA…GMVA), 122 to 142 (AGVG…VILI), and 219 to 239 (AVAA…FDFV). 3 Solcar repeats span residues 16–102 (LQTA…FEKE), 114–205 (LSFG…AKNQ), and 213–296 (SPPV…GPHS).

The protein belongs to the mitochondrial carrier (TC 2.A.29) family.

The protein resides in the mitochondrion inner membrane. Its function is as follows. Solute carrier protein; part of the Fusarium detoxification of benzoxazolinone cluster involved in the degradation of benzoxazolinones produced by the host plant. Maize, wheat, and rye produce the 2 benzoxazinone phytoanticipins 2,4-dihy-droxy-7-methoxy-1,4-benzoxazin-3-one (DIMBOA) and 2,4-dihydroxy-1,4-benzoxazin-3-one (DIBOA) that, due to their inherent instability once released, spontaneously degrade to the more stable corresponding benzoxazolinones, 6-methoxy-2-benzoxazolinone (MBOA) and 2-benzoxazolinone (BOA), respectively. The protein is Solute carrier protein FPSE_08119 of Fusarium pseudograminearum (strain CS3096) (Wheat and barley crown-rot fungus).